Consider the following 650-residue polypeptide: DNA topoisomerase 3 (650 aa).

The 134-residue stretch at 1 to 134 folds into the Toprim domain; that stretch reads MRLFIAEKPS…KLNQIQRCLI (134 aa). Mg(2+)-binding residues include E7, D103, and D105. The region spanning 155-617 is the Topo IA-type catalytic domain; that stretch reads FIPLATSALA…TLTNFLPELM (463 aa). Positions 194 to 199 are interaction with DNA; sequence SVGRVQ. Catalysis depends on Y342, which acts as the O-(5'-phospho-DNA)-tyrosine intermediate.

Belongs to the type IA topoisomerase family. It depends on Mg(2+) as a cofactor.

It catalyses the reaction ATP-independent breakage of single-stranded DNA, followed by passage and rejoining.. Its function is as follows. Releases the supercoiling and torsional tension of DNA, which is introduced during the DNA replication and transcription, by transiently cleaving and rejoining one strand of the DNA duplex. Introduces a single-strand break via transesterification at a target site in duplex DNA. The scissile phosphodiester is attacked by the catalytic tyrosine of the enzyme, resulting in the formation of a DNA-(5'-phosphotyrosyl)-enzyme intermediate and the expulsion of a 3'-OH DNA strand. The free DNA strand then undergoes passage around the unbroken strand, thus removing DNA supercoils. Finally, in the religation step, the DNA 3'-OH attacks the covalent intermediate to expel the active-site tyrosine and restore the DNA phosphodiester backbone. This Pasteurella multocida (strain Pm70) protein is DNA topoisomerase 3.